The sequence spans 361 residues: tRNA/tmRNA (uracil-C(5))-methyltransferase (361 aa).

The S-adenosyl-L-methionine site is built by Gln-185, Tyr-213, Asn-218, Glu-234, and Asp-294. The active-site Nucleophile is Cys-319. Glu-353 (proton acceptor) is an active-site residue.

This sequence belongs to the class I-like SAM-binding methyltransferase superfamily. RNA M5U methyltransferase family. TrmA subfamily.

It catalyses the reaction uridine(54) in tRNA + S-adenosyl-L-methionine = 5-methyluridine(54) in tRNA + S-adenosyl-L-homocysteine + H(+). The enzyme catalyses uridine(341) in tmRNA + S-adenosyl-L-methionine = 5-methyluridine(341) in tmRNA + S-adenosyl-L-homocysteine + H(+). Its function is as follows. Dual-specificity methyltransferase that catalyzes the formation of 5-methyluridine at position 54 (m5U54) in all tRNAs, and that of position 341 (m5U341) in tmRNA (transfer-mRNA). This chain is tRNA/tmRNA (uracil-C(5))-methyltransferase, found in Pseudomonas entomophila (strain L48).